A 340-amino-acid chain; its full sequence is Dihydroorotate dehydrogenase (quinone) (340 aa).

FMN-binding positions include 61–65 (AGLDK) and T85. K65 provides a ligand contact to substrate. 110-114 (NRMGF) is a substrate binding site. 2 residues coordinate FMN: N138 and N171. N171 provides a ligand contact to substrate. The active-site Nucleophile is the S174. Substrate is bound at residue N176. Positions 216 and 244 each coordinate FMN. 245–246 (NT) contributes to the substrate binding site. FMN is bound by residues G267, G296, and 317-318 (YS).

It belongs to the dihydroorotate dehydrogenase family. Type 2 subfamily. In terms of assembly, monomer. FMN serves as cofactor.

The protein localises to the cell membrane. It catalyses the reaction (S)-dihydroorotate + a quinone = orotate + a quinol. The protein operates within pyrimidine metabolism; UMP biosynthesis via de novo pathway; orotate from (S)-dihydroorotate (quinone route): step 1/1. Catalyzes the conversion of dihydroorotate to orotate with quinone as electron acceptor. In Ectopseudomonas mendocina (strain ymp) (Pseudomonas mendocina), this protein is Dihydroorotate dehydrogenase (quinone).